A 372-amino-acid polypeptide reads, in one-letter code: Rab9 effector protein with kelch motifs (372 aa).

Kelch repeat units follow at residues 49–95 (KVFI…FIPS), 100–146 (SIWV…TSSA), 151–203 (QLYV…AAGT), 204–250 (KLFI…SAVA), and 254–303 (HLYV…IIPW). Residues 309-341 (SEKEDSNSATVNRDAEKGDSTEKGVTQGGDSQE) are disordered. A compositionally biased stretch (basic and acidic residues) spans 321-330 (RDAEKGDSTE). The stretch at 349–372 (LCFVFGGMNTEGEIYDDCIVTAVD) is one Kelch 6 repeat.

As to quaternary structure, interacts with PIKFYVE; the interaction recruits RABEPK to the endosomal membrane. Interacts with RAB9 in its GTP-bound conformation. Post-translationally, phosphorylated on Ser residues by PIKFYVE.

It localises to the cytoplasm. Its subcellular location is the endosome membrane. Its function is as follows. Rab9 effector required for endosome to trans-Golgi network (TGN) transport. The polypeptide is Rab9 effector protein with kelch motifs (RABEPK) (Bos taurus (Bovine)).